The chain runs to 108 residues: Phosphoribosyl-ATP pyrophosphatase (108 aa).

This sequence belongs to the PRA-PH family.

Its subcellular location is the cytoplasm. It carries out the reaction 1-(5-phospho-beta-D-ribosyl)-ATP + H2O = 1-(5-phospho-beta-D-ribosyl)-5'-AMP + diphosphate + H(+). It participates in amino-acid biosynthesis; L-histidine biosynthesis; L-histidine from 5-phospho-alpha-D-ribose 1-diphosphate: step 2/9. The polypeptide is Phosphoribosyl-ATP pyrophosphatase (Geobacter sulfurreducens (strain ATCC 51573 / DSM 12127 / PCA)).